The sequence spans 388 residues: L-lactate dehydrogenase (388 aa).

The 380-residue stretch at 1–380 (MIISAASDYR…SADALSRVTR (380 aa)) folds into the FMN hydroxy acid dehydrogenase domain. Tyr-24 provides a ligand contact to substrate. FMN is bound by residues Ser-106 and Gln-127. Tyr-129 is a binding site for substrate. Thr-155 serves as a coordination point for FMN. Arg-164 lines the substrate pocket. Lys-251 is an FMN binding site. The active-site Proton acceptor is His-275. Residue Arg-278 coordinates substrate. Residue 306–330 (DSGIRSGLDVVRMLALGADAVLLGR) participates in FMN binding.

This sequence belongs to the FMN-dependent alpha-hydroxy acid dehydrogenase family. The cofactor is FMN.

Its subcellular location is the cell inner membrane. It carries out the reaction (S)-lactate + A = pyruvate + AH2. Its function is as follows. Catalyzes the conversion of L-lactate to pyruvate. Is coupled to the respiratory chain. The chain is L-lactate dehydrogenase from Xanthomonas oryzae pv. oryzae (strain MAFF 311018).